Consider the following 366-residue polypeptide: DNA replication and repair protein RecF (366 aa).

30–37 (GRNAQGKT) provides a ligand contact to ATP.

It belongs to the RecF family.

It is found in the cytoplasm. Functionally, the RecF protein is involved in DNA metabolism; it is required for DNA replication and normal SOS inducibility. RecF binds preferentially to single-stranded, linear DNA. It also seems to bind ATP. The polypeptide is DNA replication and repair protein RecF (Streptococcus thermophilus (strain ATCC BAA-250 / LMG 18311)).